The primary structure comprises 607 residues: Autophagy-related protein 22-2 (607 aa).

A disordered region spans residues Phe9–Thr31. A helical membrane pass occupies residues Tyr44–Leu64. Residues Asn88 and Asn91 are each glycosylated (N-linked (GlcNAc...) asparagine). 3 helical membrane passes run Ser111–Phe131, Thr143–Val160, and Phe161–Val178. Positions Gln203 to Ser263 are disordered. Asn235 carries an N-linked (GlcNAc...) asparagine glycan. The next 8 helical transmembrane spans lie at Gly277 to Leu297, Thr310 to Val330, Val381 to Thr401, Pro415 to Trp435, Ile450 to Pro470, Trp484 to Cys504, Tyr521 to Val543, and Gly552 to Ala572. A disordered region spans residues Thr585–Glu607.

Belongs to the ATG22 family.

The protein resides in the vacuole membrane. In terms of biological role, vacuolar effluxer which mediate the efflux of amino acids resulting from autophagic degradation. The release of autophagic amino acids allows the maintenance of protein synthesis and viability during nitrogen starvation. The chain is Autophagy-related protein 22-2 (atg22-2) from Penicillium rubens (strain ATCC 28089 / DSM 1075 / NRRL 1951 / Wisconsin 54-1255) (Penicillium chrysogenum).